The primary structure comprises 181 residues: Adenine phosphoribosyltransferase (181 aa).

The protein belongs to the purine/pyrimidine phosphoribosyltransferase family. In terms of assembly, homodimer.

It is found in the cytoplasm. It catalyses the reaction AMP + diphosphate = 5-phospho-alpha-D-ribose 1-diphosphate + adenine. Its pathway is purine metabolism; AMP biosynthesis via salvage pathway; AMP from adenine: step 1/1. In terms of biological role, catalyzes a salvage reaction resulting in the formation of AMP, that is energically less costly than de novo synthesis. The chain is Adenine phosphoribosyltransferase from Pseudoalteromonas translucida (strain TAC 125).